The sequence spans 292 residues: 4-hydroxybenzoate octaprenyltransferase (292 aa).

Transmembrane regions (helical) follow at residues 23–43 (PIGIFLLLWPALWALWIAGEG), 47–67 (PGVAAVIVFGVVLMRAAGCVI), 98–118 (LILFMVLCLTAFALVLTMNWL), 141–161 (HLPQAYLGLAFGWAIPMTFAA), 164–184 (GSIPVVAWALYAATVLWALIY), 211–231 (YDREIIGALQIAMLAILAGIG), 233–253 (YLGLGGLYALGLAAAAGFSVY), and 270–290 (FLNNHWFGAAVFAGLFADYLW).

It belongs to the UbiA prenyltransferase family. Requires Mg(2+) as cofactor.

The protein localises to the cell inner membrane. The catalysed reaction is all-trans-octaprenyl diphosphate + 4-hydroxybenzoate = 4-hydroxy-3-(all-trans-octaprenyl)benzoate + diphosphate. It functions in the pathway cofactor biosynthesis; ubiquinone biosynthesis. Its function is as follows. Catalyzes the prenylation of para-hydroxybenzoate (PHB) with an all-trans polyprenyl group. Mediates the second step in the final reaction sequence of ubiquinone-8 (UQ-8) biosynthesis, which is the condensation of the polyisoprenoid side chain with PHB, generating the first membrane-bound Q intermediate 3-octaprenyl-4-hydroxybenzoate. This chain is 4-hydroxybenzoate octaprenyltransferase, found in Methylococcus capsulatus (strain ATCC 33009 / NCIMB 11132 / Bath).